A 195-amino-acid polypeptide reads, in one-letter code: Dihydroneopterin triphosphate diphosphatase (195 aa).

The Proton acceptor role is filled by Asp-73.

It belongs to the HAM1 NTPase family. Requires Mn(2+) as cofactor.

The catalysed reaction is 7,8-dihydroneopterin 3'-triphosphate + H2O = 7,8-dihydroneopterin 3'-phosphate + diphosphate + H(+). It participates in cofactor biosynthesis; tetrahydrofolate biosynthesis. In terms of biological role, pyrophosphatase involved in the biosynthesis of tetrahydrofolate. Catalyzes the hydrolysis of dihydroneopterin triphosphate (DHNTP) to dihydroneopterin monophosphate (DHNMP) and pyrophosphate. Shows a strict substrate specificity. Has only weak activity with GTP, ITP, XTP and dTTP, and cannot use ATP, UTP, CTP, NAD(+), NADH, diadenosine triphosphate, diadenosine tetraphosphate, ADP-ribose and UDP-glucose. This chain is Dihydroneopterin triphosphate diphosphatase, found in Limosilactobacillus reuteri (strain DSM 20016) (Lactobacillus reuteri).